Reading from the N-terminus, the 338-residue chain is Fructose-1,6-bisphosphatase class 1 1 (338 aa).

Residues Glu91, Asp113, Leu115, and Asp116 each coordinate Mg(2+). Substrate contacts are provided by residues 116 to 119 (DGSS), Asn208, and Lys274. Glu280 serves as a coordination point for Mg(2+).

This sequence belongs to the FBPase class 1 family. Homotetramer. The cofactor is Mg(2+).

It localises to the cytoplasm. It carries out the reaction beta-D-fructose 1,6-bisphosphate + H2O = beta-D-fructose 6-phosphate + phosphate. Its pathway is carbohydrate biosynthesis; gluconeogenesis. The polypeptide is Fructose-1,6-bisphosphatase class 1 1 (Cupriavidus metallidurans (strain ATCC 43123 / DSM 2839 / NBRC 102507 / CH34) (Ralstonia metallidurans)).